We begin with the raw amino-acid sequence, 153 residues long: Movement protein (153 aa).

Disordered regions lie at residues 1 to 24 (MAQE…EQDP) and 121 to 153 (PWVA…RNQR). The segment covering 121-138 (PWVATLIPSQSAGPPQRS) has biased composition (polar residues).

Belongs to the luteoviruses movement protein family.

Transports viral genome to neighboring plant cells directly through plasmosdesmata, without any budding. The movement protein allows efficient cell to cell propagation, by bypassing the host cell wall barrier. In Avena byzantina (Oat), this protein is Movement protein.